Here is a 1095-residue protein sequence, read N- to C-terminus: MPAMRGLLAPQNTFLDTIATRFDGTHSNFVLGNAQVAGLFPVVYCSDGFCDLTGFSRAEVMQRGCACSFLYGPDTSELVRQQIRKALDEHKEFKAELILYRKSGLPFWCLLDVIPIKNEKGEVALFLVSHKDISETKNRGGPDNWKERGGGRRRYGRAGSKGFNANRRRSRAVLYHLSGHLQKQPKGKHKLNKGVFGEKPNLPEYKVAAIRKSPFILLHCGALRATWDGFILLATLYVAVTVPYSVCVSTAREPSAARGPPSVCDLAVEVLFILDIVLNFRTTFVSKSGQVVFAPKSICLHYVTTWFLLDVIAALPFDLLHAFKVNVYVGAHLLKTVRLLRLLRLLPRLDRYSQYSAVVLTLLMAVFALLAHWVACVWFYIGQQEIESSESELPEIGWLQELARRLETPYYLVSRSPDGGNSSGQSENCSSSSSSSGSGGGRGSEANGTGLELLGGPSLRSAYITSLYFALSSLTSVGFGNVSANTDTEKIFSICTMLIGALMHAVVFGNVTAIIQRMYARRFLYHSRTRDLRDYIRIHRIPKPLKQRMLEYFQATWAVNNGIDTTELLQSLPDELRADIAMHLHKEVLQLPLFEAASRGCLRALSLALRPAFCTPGEYLIHQGDALQALYFVCSGSMEVLKGGTVLAILGKGDLIGCELPQREQVVKANADVKGLTYCVLQCLQLAGLHESLALYPEFAPRFSRGLRGELSYNLGAGGVSAEVDTSSLSGDNTLMSTLEEKETDGEQGHTVSPAPADEPSSPLLSPGCTSSSSAAKLLSPRRTAPRPRLGGRGRPSRAGVLKPEAGPSAHPRSLDGLQLPPMPWNVPPDLSPRVVDGIEDGCSSDQPKFSFRVGQSGPECSSSPSPGTESGLLTVPLGPSEARNTDTLDKLRQAVMELSEQVLQMREGLQSLRQAVQLILVPQGEGQCPRGSGEEPCPATASGLLQPLRVDTGASSYCLQPPAGSVLSGTWPHPRPGQPPPLMAPWPWGPPASQSSPWPRATALWTSTSDSEPPGSGDLCSEPSTPASPPPSEEGARTGTPAPVSQAEATSTGEPPPGPGGRALPWDPHSLEMVLIGCHGPGTVQWTQEEGTGV.

Over Met1 to Asp228 the chain is Cytoplasmic. The PAS domain maps to Ile18–His90. The PAC domain occupies Phe93–Trp145. Residues Lys137–Gly150 show a composition bias toward basic and acidic residues. The segment at Lys137–Lys161 is disordered. The chain crosses the membrane as a helical span at residues Gly229 to Ser249. The Extracellular segment spans residues Thr250–Gly259. A helical transmembrane segment spans residues Pro260–Phe280. Residues Arg281–Tyr302 are Cytoplasmic-facing. A helical transmembrane segment spans residues Val303–Phe323. Topologically, residues Lys324–Ala331 are extracellular. The chain crosses the membrane as a helical; Voltage-sensor span at residues His332–Tyr352. Over Ser353–Thr361 the chain is Cytoplasmic. The chain crosses the membrane as a helical span at residues Leu362–Gly382. The Extracellular segment spans residues Gln383–Ile464. Positions Pro417–Asn447 are disordered. The segment covering Gly419–Ser436 has biased composition (low complexity). N-linked (GlcNAc...) asparagine glycosylation is found at Asn421, Asn428, and Asn447. Residues Thr465–Asn485 constitute an intramembrane region (pore-forming). Residues Ser476–Asn481 carry the Selectivity filter motif. Over Thr486–Lys490 the chain is Extracellular. The chain crosses the membrane as a helical span at residues Ile491 to Val511. Residues Thr512–Val1095 are Cytoplasmic-facing. Leu593–Arg708 is an a nucleoside 3',5'-cyclic phosphate binding site. Disordered regions lie at residues Glu740–Met823, Val854–Ala883, and Gly965–Pro1069. Positions Thr784–Pro796 are enriched in basic residues. Over residues Ser857–Gly872 the composition is skewed to low complexity. The segment covering His974–Pro991 has biased composition (pro residues).

It belongs to the potassium channel family. H (Eag) (TC 1.A.1.20) subfamily. Kv12.2/KCNH3 sub-subfamily. In terms of assembly, the potassium channel is probably composed of a homo- or heterotetrameric complex of pore-forming alpha subunits that can associate with modulating beta subunits. Interacts with KCNE1 and KCNE3; these interactions regulate KCNH3 trafficking to the plasma membrane and its subsequent voltage-gated potassium channel activity. N-glycosylated. N-glycosylation mediates traffick to the cell membrane but is not necessary for voltage-gated potassium channel activity. In terms of tissue distribution, detected in brain, but not in other tissues.

It localises to the cell membrane. The enzyme catalyses K(+)(in) = K(+)(out). Functionally, pore-forming (alpha) subunit of a voltage-gated inwardly rectifying potassium channel. Charactherized by a fast rate of activation during depolarization followed by a rapid inactivation at much more depolarized value causing inward rectification due to a C-type inactivation mechanism. Exhibits a rapid recovery from inactivation. The chain is Voltage-gated inwardly rectifying potassium channel KCNH3 from Mus musculus (Mouse).